The sequence spans 411 residues: Serine/threonine transporter SstT (411 aa).

The next 8 helical transmembrane spans lie at 17–37, 41–61, 79–99, 138–158, 189–209, 214–234, 295–315, and 327–347; these read IMVGLVAGIIVALVSPATASA, LGALFVGALKAVAPVLVLVLV, ILFLYLLGTFAAALVAVVVSF, ALISANYIGILAWAVGLGLAL, LGIFGLVASTLAETGFGALWG, LVVLIGCMLLVALVLNPLIVF, MAGAAITITVLTLAAVHTLGI, and VVAAVCACGASGVAGGSLLLI.

The protein belongs to the dicarboxylate/amino acid:cation symporter (DAACS) (TC 2.A.23) family.

The protein resides in the cell inner membrane. It catalyses the reaction L-serine(in) + Na(+)(in) = L-serine(out) + Na(+)(out). The catalysed reaction is L-threonine(in) + Na(+)(in) = L-threonine(out) + Na(+)(out). Its function is as follows. Involved in the import of serine and threonine into the cell, with the concomitant import of sodium (symport system). In Serratia proteamaculans (strain 568), this protein is Serine/threonine transporter SstT.